The chain runs to 388 residues: Pyruvate dehydrogenase E1 component subunit alpha, testis-specific form, mitochondrial (388 aa).

The N-terminal 27 residues, 1 to 27 (MLAAFISRVLRRVAQKSARRVLVASRN), are a transit peptide targeting the mitochondrion. Pyruvate is bound by residues histidine 90, tyrosine 116, arginine 117, glycine 163, valine 165, aspartate 194, glycine 195, alanine 196, asparagine 223, and tyrosine 225. 8 residues coordinate thiamine diphosphate: tyrosine 116, arginine 117, glycine 163, valine 165, aspartate 194, glycine 195, alanine 196, and asparagine 223. Aspartate 194 provides a ligand contact to Mg(2+). Asparagine 223 and tyrosine 225 together coordinate Mg(2+). Histidine 290 contributes to the thiamine diphosphate binding site. Serine 291 is modified (phosphoserine; by PDK1, PDK2, PDK3 and PDK4). At serine 293 the chain carries Phosphoserine. Phosphoserine; by PDK3 is present on serine 298.

As to quaternary structure, heterotetramer of two PDHA2 and two PDHB subunits. The heterotetramer interacts with DLAT, and is part of the multimeric pyruvate dehydrogenase complex that contains multiple copies of pyruvate dehydrogenase (E1), dihydrolipoamide acetyltransferase (DLAT, E2) and lipoamide dehydrogenase (DLD, E3). These subunits are bound to an inner core composed of about 48 DLAT and 12 PDHX molecules. It depends on thiamine diphosphate as a cofactor. The cofactor is Mg(2+). Post-translationally, phosphorylation at Ser-291, Ser-293 and Ser-298 by PDK family kinases inactivates the enzyme; for this phosphorylation at a single site is sufficient. Phosphorylation at Ser-293 interferes with access to active site, and thereby inactivates the enzyme. Dephosphorylation at all three sites, i.e. at Ser-291, Ser-293 and Ser-298, is required for reactivation. In terms of tissue distribution, testis. Expressed in postmeiotic spermatogenic cells.

The protein localises to the mitochondrion matrix. The enzyme catalyses N(6)-[(R)-lipoyl]-L-lysyl-[protein] + pyruvate + H(+) = N(6)-[(R)-S(8)-acetyldihydrolipoyl]-L-lysyl-[protein] + CO2. Pyruvate dehydrogenase activity is inhibited by phosphorylation of PDHA2; it is reactivated by dephosphorylation. Functionally, the pyruvate dehydrogenase complex catalyzes the overall conversion of pyruvate to acetyl-CoA and CO(2), and thereby links the glycolytic pathway to the tricarboxylic cycle. The sequence is that of Pyruvate dehydrogenase E1 component subunit alpha, testis-specific form, mitochondrial (PDHA2) from Homo sapiens (Human).